The primary structure comprises 239 residues: Small ribosomal subunit protein uS5 (239 aa).

Residues 1-62 (MADETEIQAA…DDRRGSEEQG (62 aa)) form a disordered region. Residues 9-19 (AAAPAEAAPGA) are compositionally biased toward low complexity. Positions 34–62 (GGNDRGGDRGRGRDGRGRRDDRRGSEEQG) are enriched in basic and acidic residues. Residues 65 to 128 (LIEKLVHINR…AAAKKAMVRV (64 aa)) enclose the S5 DRBM domain.

This sequence belongs to the universal ribosomal protein uS5 family. Part of the 30S ribosomal subunit. Contacts proteins S4 and S8.

Functionally, with S4 and S12 plays an important role in translational accuracy. In terms of biological role, located at the back of the 30S subunit body where it stabilizes the conformation of the head with respect to the body. The chain is Small ribosomal subunit protein uS5 from Rhizorhabdus wittichii (strain DSM 6014 / CCUG 31198 / JCM 15750 / NBRC 105917 / EY 4224 / RW1) (Sphingomonas wittichii).